The sequence spans 309 residues: Taste receptor type 2 member 46 (309 aa).

Met-1 is a topological domain (extracellular). The helical transmembrane segment at Ile-2–Phe-22 threads the bilayer. At Ala-23–Gln-46 the chain is on the cytoplasmic side. A helical transmembrane segment spans residues Ile-47–Tyr-67. Residues Ala-68 to Asn-86 lie on the Extracellular side of the membrane. A helical membrane pass occupies residues Val-87–Leu-107. The Cytoplasmic portion of the chain corresponds to Leu-108–Lys-126. Residues Ser-127–Ile-147 traverse the membrane as a helical segment. Residues Asn-148–Thr-178 are Extracellular-facing. Residues Asn-161 and Asn-176 are each glycosylated (N-linked (GlcNAc...) asparagine). The helical transmembrane segment at Val-179–Ile-199 threads the bilayer. Over Cys-200–Gln-229 the chain is Cytoplasmic. Residues Thr-230 to Trp-250 form a helical membrane-spanning segment. The Extracellular portion of the chain corresponds to Ser-251 to Pro-259. The chain crosses the membrane as a helical span at residues Val-260–Ile-280. Topologically, residues Trp-281–Ser-309 are cytoplasmic.

The protein belongs to the G-protein coupled receptor T2R family. As to expression, expressed in subsets of taste receptor cells of the tongue and exclusively in gustducin-positive cells. Expressed on ciliated airway epithelium.

The protein localises to the membrane. Its subcellular location is the cell projection. The protein resides in the cilium membrane. Its function is as follows. Receptor that may play a role in the perception of bitterness and is gustducin-linked. May play a role in sensing the chemical composition of the gastrointestinal content. The activity of this receptor may stimulate alpha gustducin, mediate PLC-beta-2 activation and lead to the gating of TRPM5. In airway epithelial cells, binding of bitter compounds increases the intracellular calcium ion concentration and stimulates ciliary beat frequency. This is Taste receptor type 2 member 46 (TAS2R46) from Homo sapiens (Human).